The chain runs to 33 residues: Neutrophil defensin 3 (33 aa).

3 disulfides stabilise this stretch: cysteine 3–cysteine 31, cysteine 5–cysteine 20, and cysteine 10–cysteine 30.

This sequence belongs to the alpha-defensin family.

It is found in the secreted. Anti-fungal and bactericidal activity, greater against Gram-positive bacteria. The polypeptide is Neutrophil defensin 3 (Mesocricetus auratus (Golden hamster)).